A 381-amino-acid polypeptide reads, in one-letter code: Metallophosphoesterase 1 (381 aa).

Residues 15-35 (LIFAFVSVFVFCEYVIYYLVI) form a helical membrane-spanning segment. The a divalent metal cation site is built by D59, D101, N139, H234, H288, and H290. Residues 341–361 (TVLVVYCSSCLIIALITLIHL) traverse the membrane as a helical segment. Positions 377 to 381 (KHKTL) match the Di-lysine motif motif.

It belongs to the metallophosphoesterase superfamily. MPPE1 family. It depends on Mn(2+) as a cofactor.

The protein resides in the endoplasmic reticulum-Golgi intermediate compartment membrane. Metallophosphoesterase that catalyzes the removal of a side-chain ethanolamine-phosphate (EtNP) from the second mannose of the GPI-anchor protein intermediate. Participates in the glycan remodeling steps of GPI-anchor maturation to allow an efficient transport of GPI-anchor proteins from the endoplasmic reticulum to the Golgi. In Danio rerio (Zebrafish), this protein is Metallophosphoesterase 1.